The sequence spans 513 residues: ATP synthase subunit alpha (513 aa).

Glycine 169–threonine 176 is a binding site for ATP.

This sequence belongs to the ATPase alpha/beta chains family. As to quaternary structure, F-type ATPases have 2 components, CF(1) - the catalytic core - and CF(0) - the membrane proton channel. CF(1) has five subunits: alpha(3), beta(3), gamma(1), delta(1), epsilon(1). CF(0) has three main subunits: a(1), b(2) and c(9-12). The alpha and beta chains form an alternating ring which encloses part of the gamma chain. CF(1) is attached to CF(0) by a central stalk formed by the gamma and epsilon chains, while a peripheral stalk is formed by the delta and b chains.

The protein resides in the cell inner membrane. It catalyses the reaction ATP + H2O + 4 H(+)(in) = ADP + phosphate + 5 H(+)(out). Its function is as follows. Produces ATP from ADP in the presence of a proton gradient across the membrane. The alpha chain is a regulatory subunit. This Francisella tularensis subsp. tularensis (strain SCHU S4 / Schu 4) protein is ATP synthase subunit alpha.